An 883-amino-acid chain; its full sequence is Protein SEY1 homolog (883 aa).

Residues 1–795 are Cytoplasmic-facing; that stretch reads MQMDRKTQII…ETGGKMSLKN (795 aa). Residues 33–279 enclose the GB1/RHD3-type G domain; sequence GFNYNVVAIL…IPSDGFAHYC (247 aa). 43-50 provides a ligand contact to GTP; sequence GSQSSGKS. The stretch at 673-693 forms a coiled coil; sequence LDEIMDVLKSKLDEISDNLSS. Residues 796–816 traverse the membrane as a helical segment; it reads VPLFFWVILLILGWNELLFFI. Topologically, residues 817–819 are lumenal; that stretch reads RFF. A helical membrane pass occupies residues 820 to 840; sequence FRLNIILPLFLAAAVILSTLF. Residues 841–883 are Cytoplasmic-facing; sequence FNGNMEVLSTINKVVFFLAKSSFGFYRQLQTMGEKVAQVPTAD.

The protein belongs to the TRAFAC class dynamin-like GTPase superfamily. GB1/RHD3 GTPase family. RHD3 subfamily.

It is found in the endoplasmic reticulum membrane. Probable GTP-binding protein involved in generating and maintaining the structure of the tubular endoplasmic reticulum network. The chain is Protein SEY1 homolog from Plasmodium knowlesi (strain H).